Here is a 425-residue protein sequence, read N- to C-terminus: Serine--tRNA ligase (425 aa).

L-serine is bound at residue 230 to 232 (TSE). Residue 261–263 (RKE) coordinates ATP. Glu284 lines the L-serine pocket. 348 to 351 (EISS) provides a ligand contact to ATP. Ser385 provides a ligand contact to L-serine.

It belongs to the class-II aminoacyl-tRNA synthetase family. Type-1 seryl-tRNA synthetase subfamily. In terms of assembly, homodimer. The tRNA molecule binds across the dimer.

Its subcellular location is the cytoplasm. It carries out the reaction tRNA(Ser) + L-serine + ATP = L-seryl-tRNA(Ser) + AMP + diphosphate + H(+). The catalysed reaction is tRNA(Sec) + L-serine + ATP = L-seryl-tRNA(Sec) + AMP + diphosphate + H(+). Its pathway is aminoacyl-tRNA biosynthesis; selenocysteinyl-tRNA(Sec) biosynthesis; L-seryl-tRNA(Sec) from L-serine and tRNA(Sec): step 1/1. Functionally, catalyzes the attachment of serine to tRNA(Ser). Is also able to aminoacylate tRNA(Sec) with serine, to form the misacylated tRNA L-seryl-tRNA(Sec), which will be further converted into selenocysteinyl-tRNA(Sec). In Wolbachia pipientis wMel, this protein is Serine--tRNA ligase.